Consider the following 455-residue polypeptide: Adenylyltransferase and sulfurtransferase MOCS3 (455 aa).

Residues Gly-90, Asp-111, 118–122 (SNLAR), Lys-135, and 179–180 (DN) each bind ATP. The segment at 156-236 (AQALTPATAL…QPPPAETVTN (81 aa)) is interaction with NFS1. Residues Cys-220 and Cys-223 each contribute to the Zn(2+) site. Cys-237 functions as the Glycyl thioester intermediate; for adenylyltransferase activity in the catalytic mechanism. Positions 295 and 298 each coordinate Zn(2+). A disulfide bond links Cys-314 and Cys-322. Positions 345–453 (SGSPHLLLDV…WAAKVDGTFP (109 aa)) constitute a Rhodanese domain. The Cysteine persulfide intermediate; for sulfurtransferase activity role is filled by Cys-410. A Cysteine persulfide modification is found at Cys-410.

This sequence in the N-terminal section; belongs to the HesA/MoeB/ThiF family. UBA4 subfamily. Interacts with NFS1. The cofactor is Zn(2+).

The protein resides in the cytoplasm. It localises to the cytosol. It carries out the reaction [molybdopterin-synthase sulfur-carrier protein]-C-terminal Gly-Gly + ATP + H(+) = [molybdopterin-synthase sulfur-carrier protein]-C-terminal Gly-Gly-AMP + diphosphate. It catalyses the reaction [molybdopterin-synthase sulfur-carrier protein]-C-terminal Gly-Gly-AMP + S-sulfanyl-L-cysteinyl-[cysteine desulfurase] + AH2 = [molybdopterin-synthase sulfur-carrier protein]-C-terminal-Gly-aminoethanethioate + L-cysteinyl-[cysteine desulfurase] + A + AMP + 2 H(+). It functions in the pathway tRNA modification; 5-methoxycarbonylmethyl-2-thiouridine-tRNA biosynthesis. The protein operates within cofactor biosynthesis; molybdopterin biosynthesis. In terms of biological role, plays a central role in 2-thiolation of mcm(5)S(2)U at tRNA wobble positions of cytosolic tRNA(Lys), tRNA(Glu) and tRNA(Gln). Also essential during biosynthesis of the molybdenum cofactor. Acts by mediating the C-terminal thiocarboxylation of sulfur carriers URM1 and MOCS2A. Its N-terminus first activates URM1 and MOCS2A as acyl-adenylates (-COAMP), then the persulfide sulfur on the catalytic cysteine is transferred to URM1 and MOCS2A to form thiocarboxylation (-COSH) of their C-terminus. The reaction probably involves hydrogen sulfide that is generated from the persulfide intermediate and that acts as a nucleophile towards URM1 and MOCS2A. Subsequently, a transient disulfide bond is formed. Does not use thiosulfate as sulfur donor; NFS1 acting as a sulfur donor for thiocarboxylation reactions. This chain is Adenylyltransferase and sulfurtransferase MOCS3, found in Sus scrofa (Pig).